Here is a 289-residue protein sequence, read N- to C-terminus: Zinc finger matrin-type protein 3 (289 aa).

2 consecutive Matrin-type zinc fingers follow at residues 70-100 (LFCK…KLRN) and 147-177 (DYCK…RLRL). Disordered regions lie at residues 180 to 202 (AQSH…EGSE) and 265 to 289 (ESKQ…GYVQ). The segment at 245–275 (FYCSMCNVGAGEEVEFRQHLESKQHKSKVSE) adopts a Matrin-type 3 zinc-finger fold. Over residues 265–282 (ESKQHKSKVSEQRYRSEM) the composition is skewed to basic and acidic residues.

In terms of assembly, interacts with dsRNA. In terms of tissue distribution, highly expressed in brain, gut, lung, and testis.

The protein resides in the nucleus. The protein localises to the nucleolus. Functionally, acts as a bona fide target gene of p53/TP53. May play a role in the TP53-dependent growth regulatory pathway. May contribute to TP53-mediated apoptosis by regulation of TP53 expression and translocation to the nucleus and nucleolus. In Rattus norvegicus (Rat), this protein is Zinc finger matrin-type protein 3.